The following is a 568-amino-acid chain: Probable WRKY transcription factor 34 (568 aa).

The segment at residues 172 to 236 (ACCAPADDGY…YTGDHIHSKP (65 aa)) is a DNA-binding region (WRKY 1). Zn(2+) contacts are provided by C203, C208, H231, and H233. Disordered regions lie at residues 230–252 (DHIHSKPPPNRRSGIGSSGTGQD) and 337–360 (KRRKLEAYATETSGSTRASREPRV). The WRKY 2 DNA-binding region spans 366 to 431 (SDIDILDDGY…YIGKHTHVVP (66 aa)). Zn(2+) contacts are provided by C397, C402, H426, and H428.

Belongs to the WRKY group I family.

It localises to the nucleus. Its function is as follows. Transcription factor. Interacts specifically with the W box (5'-(T)TGAC[CT]-3'), a frequently occurring elicitor-responsive cis-acting element. This chain is Probable WRKY transcription factor 34 (WRKY34), found in Arabidopsis thaliana (Mouse-ear cress).